A 548-amino-acid polypeptide reads, in one-letter code: Medium/long-chain-fatty-acid--CoA/3-oxocholest-4-en-26-oate--CoA ligase (548 aa).

ATP-binding positions include 174-182 (TGGTTGFPK), aspartate 415, arginine 430, and lysine 521. Over residues 520–541 (GKPDYRWAKEQTEARPADDVHA) the composition is skewed to basic and acidic residues. The disordered stretch occupies residues 520–548 (GKPDYRWAKEQTEARPADDVHAGHVTSGG).

Belongs to the ATP-dependent AMP-binding enzyme family.

The catalysed reaction is a medium-chain fatty acid + ATP + CoA = a medium-chain fatty acyl-CoA + AMP + diphosphate. It carries out the reaction a long-chain fatty acid + ATP + CoA = a long-chain fatty acyl-CoA + AMP + diphosphate. The enzyme catalyses (25S)-3-oxocholest-4-en-26-oate + ATP + CoA = (25S)-3-oxocholest-4-en-26-oyl-CoA + AMP + diphosphate. It functions in the pathway lipid metabolism; fatty acid biosynthesis. The protein operates within steroid metabolism; cholesterol metabolism. Its function is as follows. Catalyzes the activation of medium/long-chain fatty acids as acyl-coenzyme A (acyl-CoA), which are then transferred to the multifunctional polyketide synthase (PKS) type III for further chain extension. Also involved in the degradation of cholesterol via the degradation of the side chains of C-24 branched-chain sterols. Catalyzes the ATP-dependent CoA thioesterification of the sterol 3-oxocholest-4-en-26-oate to yield 3-oxocholest-4-en-26-oyl-CoA. In Mycobacterium bovis (strain ATCC BAA-935 / AF2122/97), this protein is Medium/long-chain-fatty-acid--CoA/3-oxocholest-4-en-26-oate--CoA ligase.